A 316-amino-acid polypeptide reads, in one-letter code: Glutathione synthetase (316 aa).

In terms of domain architecture, ATP-grasp spans 125-310 (KLFTAWFSDL…ITGMLMDAIE (186 aa)). An ATP-binding site is contributed by 151–207 (WEKHSDIILKPLDGMGGASIFRVKEGDPNLGVIAETLTEHGTCYCMAQNYLPAIKDG). Residues E281 and N283 each contribute to the Mg(2+) site.

This sequence belongs to the prokaryotic GSH synthase family. Requires Mg(2+) as cofactor. It depends on Mn(2+) as a cofactor.

It catalyses the reaction gamma-L-glutamyl-L-cysteine + glycine + ATP = glutathione + ADP + phosphate + H(+). It functions in the pathway sulfur metabolism; glutathione biosynthesis; glutathione from L-cysteine and L-glutamate: step 2/2. This is Glutathione synthetase from Shigella flexneri.